The sequence spans 391 residues: Succinate--CoA ligase [ADP-forming] subunit beta (391 aa).

Residues 9-245 form the ATP-grasp domain; that stretch reads KQIFAEYGVP…LSEEDPDEVE (237 aa). ATP-binding positions include K46, 53–55, E99, A102, and E107; that span reads GRG. N200 and D214 together coordinate Mg(2+). Residues N265 and 322 to 324 each bind substrate; that span reads GIV.

Belongs to the succinate/malate CoA ligase beta subunit family. In terms of assembly, heterotetramer of two alpha and two beta subunits. Mg(2+) serves as cofactor.

The enzyme catalyses succinate + ATP + CoA = succinyl-CoA + ADP + phosphate. It catalyses the reaction GTP + succinate + CoA = succinyl-CoA + GDP + phosphate. It functions in the pathway carbohydrate metabolism; tricarboxylic acid cycle; succinate from succinyl-CoA (ligase route): step 1/1. Functionally, succinyl-CoA synthetase functions in the citric acid cycle (TCA), coupling the hydrolysis of succinyl-CoA to the synthesis of either ATP or GTP and thus represents the only step of substrate-level phosphorylation in the TCA. The beta subunit provides nucleotide specificity of the enzyme and binds the substrate succinate, while the binding sites for coenzyme A and phosphate are found in the alpha subunit. In Sulfurovum sp. (strain NBC37-1), this protein is Succinate--CoA ligase [ADP-forming] subunit beta.